Reading from the N-terminus, the 364-residue chain is tRNA-specific 2-thiouridylase MnmA 1 (364 aa).

Residues 10-17 and methionine 36 each bind ATP; that span reads GMSGGVDS. Cysteine 106 serves as the catalytic Nucleophile. A disulfide bridge links cysteine 106 with cysteine 204. ATP is bound at residue glycine 130. The segment at 154–156 is interaction with tRNA; sequence KDQ. Cysteine 204 acts as the Cysteine persulfide intermediate in catalysis. An interaction with tRNA region spans residues 310 to 311; the sequence is RY.

Belongs to the MnmA/TRMU family.

The protein resides in the cytoplasm. It carries out the reaction S-sulfanyl-L-cysteinyl-[protein] + uridine(34) in tRNA + AH2 + ATP = 2-thiouridine(34) in tRNA + L-cysteinyl-[protein] + A + AMP + diphosphate + H(+). Functionally, catalyzes the 2-thiolation of uridine at the wobble position (U34) of tRNA, leading to the formation of s(2)U34. This chain is tRNA-specific 2-thiouridylase MnmA 1, found in Caldanaerobacter subterraneus subsp. tengcongensis (strain DSM 15242 / JCM 11007 / NBRC 100824 / MB4) (Thermoanaerobacter tengcongensis).